An 865-amino-acid chain; its full sequence is Protein translocase subunit SecA (865 aa).

ATP is bound by residues Q93, 111 to 115 (GEGKT), and D501. Residues C841, C843, C852, and C853 each coordinate Zn(2+).

The protein belongs to the SecA family. As to quaternary structure, monomer and homodimer. Part of the essential Sec protein translocation apparatus which comprises SecA, SecYEG and auxiliary proteins SecDF-YajC and YidC. Zn(2+) serves as cofactor.

It localises to the cell inner membrane. It is found in the cytoplasm. It carries out the reaction ATP + H2O + cellular proteinSide 1 = ADP + phosphate + cellular proteinSide 2.. Part of the Sec protein translocase complex. Interacts with the SecYEG preprotein conducting channel. Has a central role in coupling the hydrolysis of ATP to the transfer of proteins into and across the cell membrane, serving as an ATP-driven molecular motor driving the stepwise translocation of polypeptide chains across the membrane. The sequence is that of Protein translocase subunit SecA from Helicobacter acinonychis (strain Sheeba).